We begin with the raw amino-acid sequence, 556 residues long: Formate--tetrahydrofolate ligase (556 aa).

65–72 lines the ATP pocket; that stretch reads TPAGEGKS.

Belongs to the formate--tetrahydrofolate ligase family.

The enzyme catalyses (6S)-5,6,7,8-tetrahydrofolate + formate + ATP = (6R)-10-formyltetrahydrofolate + ADP + phosphate. It participates in one-carbon metabolism; tetrahydrofolate interconversion. This chain is Formate--tetrahydrofolate ligase, found in Streptococcus agalactiae serotype III (strain NEM316).